The sequence spans 401 residues: CLIP domain-containing serine protease B9 (401 aa).

A signal peptide spans 1–26 (MTSYNRSVAWLTVCVLLALHIGGSHQ). A Clip domain is found at 30–85 (QCTTPTRLRGRCISIYECDSILDYFKQRILTWEEREFLRKSQCTGATSGRQPFVCC). Disulfide bonds link Cys-31/Cys-84, Cys-41/Cys-72, and Cys-47/Cys-85. N-linked (GlcNAc...) asparagine glycosylation occurs at Asn-88. Residues 148-400 (IYGGQNADID…YMAWVRSNIK (253 aa)) enclose the Peptidase S1 domain. Cys-178 and Cys-194 are oxidised to a cystine. Residues His-193 and Asp-257 each act as charge relay system in the active site. 2 disulfides stabilise this stretch: Cys-322–Cys-339 and Cys-349–Cys-376. Asn-330 is a glycosylation site (N-linked (GlcNAc...) asparagine). Ser-353 acts as the Charge relay system in catalysis.

It belongs to the peptidase S1 family. CLIP subfamily. In terms of assembly, forms a covalent heterodimer with SRPN2; the interaction inhibits CLIPB9 protease activity. Post-translationally, proteolytic cleavage is necessary for activation.

The protein resides in the secreted. Its activity is regulated as follows. Inhibited by serpin SRPN2. In terms of biological role, serine protease that functions in the melanization-mediated immune response. Cleaves and activates prophenoloxidase (PPO), which is required for the activation of the prophenoloxidase cascade probably following the recognition of pathogen-derived products. The protein is CLIP domain-containing serine protease B9 of Anopheles gambiae (African malaria mosquito).